We begin with the raw amino-acid sequence, 230 residues long: Large ribosomal subunit protein uL1 (230 aa).

Belongs to the universal ribosomal protein uL1 family. In terms of assembly, part of the 50S ribosomal subunit.

Functionally, binds directly to 23S rRNA. The L1 stalk is quite mobile in the ribosome, and is involved in E site tRNA release. Its function is as follows. Protein L1 is also a translational repressor protein, it controls the translation of the L11 operon by binding to its mRNA. This Leptospira interrogans serogroup Icterohaemorrhagiae serovar copenhageni (strain Fiocruz L1-130) protein is Large ribosomal subunit protein uL1.